The following is a 268-amino-acid chain: Peptide transport system ATP-binding protein SapF (268 aa).

Residues Leu-6 to Ile-251 form the ABC transporter domain. Gly-47–Ser-54 contacts ATP.

Belongs to the ABC transporter superfamily.

The protein resides in the cell inner membrane. Involved in a peptide intake transport system that plays a role in the resistance to antimicrobial peptides. The protein is Peptide transport system ATP-binding protein SapF of Salmonella typhimurium (strain LT2 / SGSC1412 / ATCC 700720).